Reading from the N-terminus, the 178-residue chain is Large ribosomal subunit protein uL6 (178 aa).

Belongs to the universal ribosomal protein uL6 family. Part of the 50S ribosomal subunit.

In terms of biological role, this protein binds to the 23S rRNA, and is important in its secondary structure. It is located near the subunit interface in the base of the L7/L12 stalk, and near the tRNA binding site of the peptidyltransferase center. In Streptococcus pneumoniae (strain JJA), this protein is Large ribosomal subunit protein uL6.